The primary structure comprises 245 residues: Ribonuclease PH (245 aa).

Residues Arg-87 and 125-127 (GTR) contribute to the phosphate site.

It belongs to the RNase PH family. As to quaternary structure, homohexameric ring arranged as a trimer of dimers.

It catalyses the reaction tRNA(n+1) + phosphate = tRNA(n) + a ribonucleoside 5'-diphosphate. Its function is as follows. Phosphorolytic 3'-5' exoribonuclease that plays an important role in tRNA 3'-end maturation. Removes nucleotide residues following the 3'-CCA terminus of tRNAs; can also add nucleotides to the ends of RNA molecules by using nucleoside diphosphates as substrates, but this may not be physiologically important. Probably plays a role in initiation of 16S rRNA degradation (leading to ribosome degradation) during starvation. The chain is Ribonuclease PH from Streptomyces coelicolor (strain ATCC BAA-471 / A3(2) / M145).